The chain runs to 249 residues: Eukaryotic translation initiation factor 3 subunit J-A (249 aa).

The segment covering 1-15 (MADADSWDADSFEPE) has biased composition (acidic residues). The segment at 1–104 (MADADSWDAD…DTPLTPEDEL (104 aa)) is disordered. Residues 16 to 27 (EPIKKAAVHDKW) are compositionally biased toward basic and acidic residues. Residues 28-52 (EGEDEDDDVKDNWDDDEEEEKEEEE) show a composition bias toward acidic residues. Residues 34–96 (DDVKDNWDDD…QQLEETKRDT (63 aa)) are a coiled coil. Residues 53–96 (EKKTEAKPTEKKKLSEKIKEKENLQRKKQEELRKQQLEETKRDT) show a composition bias toward basic and acidic residues.

The protein belongs to the eIF-3 subunit J family. Component of the eukaryotic translation initiation factor 3 (eIF-3) complex, which is composed of 13 subunits: eif3a, eif3b, eif3c, eif3d, eif3e, eif3f, eif3g, eif3h, eif3i, eif3j, eif3k, eif3l and eif3m.

It localises to the cytoplasm. Component of the eukaryotic translation initiation factor 3 (eIF-3) complex, which is involved in protein synthesis of a specialized repertoire of mRNAs and, together with other initiation factors, stimulates binding of mRNA and methionyl-tRNAi to the 40S ribosome. The eIF-3 complex specifically targets and initiates translation of a subset of mRNAs involved in cell proliferation. The sequence is that of Eukaryotic translation initiation factor 3 subunit J-A (eif3ja) from Danio rerio (Zebrafish).